A 141-amino-acid polypeptide reads, in one-letter code: Putative pre-16S rRNA nuclease (141 aa).

Belongs to the YqgF nuclease family.

Its subcellular location is the cytoplasm. Could be a nuclease involved in processing of the 5'-end of pre-16S rRNA. This is Putative pre-16S rRNA nuclease from Aliivibrio fischeri (strain ATCC 700601 / ES114) (Vibrio fischeri).